A 108-amino-acid chain; its full sequence is Translation initiation factor 1A (108 aa).

The S1-like domain occupies 11 to 85 (PSKDVPKPEE…TKADIVYRYM (75 aa)).

This sequence belongs to the eIF-1A family.

Its function is as follows. Seems to be required for maximal rate of protein biosynthesis. Enhances ribosome dissociation into subunits and stabilizes the binding of the initiator Met-tRNA(I) to 40 S ribosomal subunits. This Metallosphaera sedula (strain ATCC 51363 / DSM 5348 / JCM 9185 / NBRC 15509 / TH2) protein is Translation initiation factor 1A (eIF1A).